A 300-amino-acid polypeptide reads, in one-letter code: Ribosomal protein bS6--L-glutamate ligase (300 aa).

The region spanning methionine 104–glutamate 287 is the ATP-grasp domain. ATP is bound by residues lysine 141, glutamate 178 to tyrosine 179, aspartate 187, and arginine 211 to asparagine 213. Mg(2+)-binding residues include aspartate 248, glutamate 260, and asparagine 262. Positions 248, 260, and 262 each coordinate Mn(2+).

The protein belongs to the RimK family. It depends on Mg(2+) as a cofactor. The cofactor is Mn(2+).

Functionally, an L-glutamate ligase that catalyzes the ATP-dependent post-translational addition of glutamate residues to the C-terminus of ribosomal protein bS6 (RpsF). Is also able to catalyze the synthesis of poly-alpha-glutamate in vitro, via ATP hydrolysis from unprotected glutamate as substrate. The number of glutamate residues added to either RpsF or to poly-alpha-glutamate changes with pH. The sequence is that of Ribosomal protein bS6--L-glutamate ligase from Shigella boydii serotype 18 (strain CDC 3083-94 / BS512).